A 509-amino-acid polypeptide reads, in one-letter code: MQNNVLILDFGSQYTQLIARRVRELNIYCEIYPYHKIPEDLSGFKAVILSGSPFSVRAEDAPHPDLSQIRGKLPILAVCYGAQYFAHFHGGKVEPSDTREYGRANLTVIKDAEPLFENIKENSQVWMSHSDSIIRLPENGVRLASTSDVLNAAYRIEGEQTFAIQFHPEVYHSTDGKQLLENFLIKIAGTKATWTPGKFVDLTVSELKEKVGDDKVVLGLSGGVDSTVAAVLLHKAIGKNLYCIFVNNGLLRKNEFESVLDQYKDMGLNVKGVDASARFLDALKGLSDPEEKRKAIGNTFIEVFDDEAHEIKDVVYLAQGTIYPDVIESVSVNGPSVTIKSHHNVGGLPDFMKLKIVEPLRMLFKDEVRRVGKELGIDKELLGRHPFPGPGLAIRILGDITEEKVRILQEVDHIFIQGLRDWMLYDKVWQAGAILLPIQSVGVMGDERTYEQVVALRAVESTDGMTADWVNLPYEFLQKTSNTIINRVKGVNRVVYDISSKPPATIEWE.

A Glutamine amidotransferase type-1 domain is found at 4-193 (NVLILDFGSQ…LIKIAGTKAT (190 aa)). Residue Cys79 is the Nucleophile of the active site. Catalysis depends on residues His167 and Glu169. Positions 194-384 (WTPGKFVDLT…LGIDKELLGR (191 aa)) constitute a GMPS ATP-PPase domain. Residue 221 to 227 (SGGVDST) coordinates ATP.

Homodimer.

The enzyme catalyses XMP + L-glutamine + ATP + H2O = GMP + L-glutamate + AMP + diphosphate + 2 H(+). The protein operates within purine metabolism; GMP biosynthesis; GMP from XMP (L-Gln route): step 1/1. Its function is as follows. Catalyzes the synthesis of GMP from XMP. This Christiangramia forsetii (strain DSM 17595 / CGMCC 1.15422 / KT0803) (Gramella forsetii) protein is GMP synthase [glutamine-hydrolyzing].